A 357-amino-acid chain; its full sequence is UDP-N-acetylglucosamine--N-acetylmuramyl-(pentapeptide) pyrophosphoryl-undecaprenol N-acetylglucosamine transferase (357 aa).

UDP-N-acetyl-alpha-D-glucosamine is bound by residues 15–17 (SGG), asparagine 125, serine 190, and glutamine 290.

Belongs to the glycosyltransferase 28 family. MurG subfamily.

Its subcellular location is the cell inner membrane. The enzyme catalyses di-trans,octa-cis-undecaprenyl diphospho-N-acetyl-alpha-D-muramoyl-L-alanyl-D-glutamyl-meso-2,6-diaminopimeloyl-D-alanyl-D-alanine + UDP-N-acetyl-alpha-D-glucosamine = di-trans,octa-cis-undecaprenyl diphospho-[N-acetyl-alpha-D-glucosaminyl-(1-&gt;4)]-N-acetyl-alpha-D-muramoyl-L-alanyl-D-glutamyl-meso-2,6-diaminopimeloyl-D-alanyl-D-alanine + UDP + H(+). The protein operates within cell wall biogenesis; peptidoglycan biosynthesis. In terms of biological role, cell wall formation. Catalyzes the transfer of a GlcNAc subunit on undecaprenyl-pyrophosphoryl-MurNAc-pentapeptide (lipid intermediate I) to form undecaprenyl-pyrophosphoryl-MurNAc-(pentapeptide)GlcNAc (lipid intermediate II). This chain is UDP-N-acetylglucosamine--N-acetylmuramyl-(pentapeptide) pyrophosphoryl-undecaprenol N-acetylglucosamine transferase, found in Chlamydia pneumoniae (Chlamydophila pneumoniae).